Here is a 391-residue protein sequence, read N- to C-terminus: Calcium-binding and spermatid-specific protein 1 (391 aa).

Disordered regions lie at residues 1 to 23 (MAEDGSPKIYSRPPRDNSKTPTE), 90 to 110 (PEKEITTPTETPNSKPKGSIT), and 152 to 221 (KEVV…KEVT). Positions 90-101 (PEKEITTPTETP) are enriched in low complexity. Phosphoserine occurs at positions 253 and 269. Residues 271–299 (EKAKDNVEDPLNDEESTDGANDWMEKETA) are disordered. Residues 278–287 (EDPLNDEEST) are compositionally biased toward acidic residues. Ser-314, Ser-347, Ser-357, Ser-372, and Ser-376 each carry phosphoserine. The disordered stretch occupies residues 330–351 (EESHVNTTDLPENETTESVTNV).

As to expression, detected only in testis. Expressed from stages X to VIII of the seminiferous epithelial cycle. Expressed from step 13 to step 16 of spermatid development (at protein level).

The protein localises to the cytoplasm. It localises to the mitochondrion inner membrane. It is found in the cell projection. The protein resides in the cilium. Its subcellular location is the flagellum. The protein localises to the cytoplasmic vesicle. It localises to the secretory vesicle. It is found in the acrosome. Calcium-binding protein. Essential for maintaining the structural integrity of the sperm flagella. This is Calcium-binding and spermatid-specific protein 1 (Cabs1) from Mus musculus (Mouse).